A 165-amino-acid chain; its full sequence is NADPH-dependent 7-cyano-7-deazaguanine reductase (165 aa).

The Thioimide intermediate role is filled by C56. The active-site Proton donor is D63. Substrate-binding positions include 78–80 (VES) and 97–98 (HE).

It belongs to the GTP cyclohydrolase I family. QueF type 1 subfamily.

The protein localises to the cytoplasm. The enzyme catalyses 7-aminomethyl-7-carbaguanine + 2 NADP(+) = 7-cyano-7-deazaguanine + 2 NADPH + 3 H(+). It functions in the pathway tRNA modification; tRNA-queuosine biosynthesis. In terms of biological role, catalyzes the NADPH-dependent reduction of 7-cyano-7-deazaguanine (preQ0) to 7-aminomethyl-7-deazaguanine (preQ1). This Bacillus licheniformis (strain ATCC 14580 / DSM 13 / JCM 2505 / CCUG 7422 / NBRC 12200 / NCIMB 9375 / NCTC 10341 / NRRL NRS-1264 / Gibson 46) protein is NADPH-dependent 7-cyano-7-deazaguanine reductase.